A 347-amino-acid chain; its full sequence is NADH-quinone oxidoreductase subunit H (347 aa).

9 helical membrane-spanning segments follow: residues 13–33 (IIMI…IAYV), 50–70 (PNVV…KFVF), 82–102 (AVFL…WAVV), 115–135 (VGIL…IMGG), 161–181 (IGFV…TDIV), 198–218 (FLDW…ISAL), 263–283 (CSLT…IWIL), 286–306 (VPGI…FAMV), and 321–341 (LGWK…AFVL).

This sequence belongs to the complex I subunit 1 family. NDH-1 is composed of 14 different subunits. Subunits NuoA, H, J, K, L, M, N constitute the membrane sector of the complex.

The protein localises to the cell inner membrane. It catalyses the reaction a quinone + NADH + 5 H(+)(in) = a quinol + NAD(+) + 4 H(+)(out). Its function is as follows. NDH-1 shuttles electrons from NADH, via FMN and iron-sulfur (Fe-S) centers, to quinones in the respiratory chain. The immediate electron acceptor for the enzyme in this species is believed to be ubiquinone. Couples the redox reaction to proton translocation (for every two electrons transferred, four hydrogen ions are translocated across the cytoplasmic membrane), and thus conserves the redox energy in a proton gradient. This subunit may bind ubiquinone. This is NADH-quinone oxidoreductase subunit H from Rhizobium leguminosarum bv. trifolii (strain WSM2304).